The primary structure comprises 262 residues: Nurim (262 aa).

Residues 1–4 (MAPA) lie on the Nuclear side of the membrane. A helical transmembrane segment spans residues 5–28 (LLLIPAALASFILAFGTGVEFVRF). At 29 to 58 (TSLRPLLGGIPESGGPDARQGWLAALQDRS) the chain is on the perinuclear space side. The chain crosses the membrane as a helical span at residues 59-80 (ILAPLAWDLGLLLLFVGQHSLM). Topologically, residues 81–97 (AAERVKAWTSRYFGVLQ) are nuclear. A helical transmembrane segment spans residues 98-114 (RSLYVACTALALQLVMR). The Perinuclear space portion of the chain corresponds to 115–133 (YWEPIPKGPVLWEARAEPW). The chain crosses the membrane as a helical span at residues 134-164 (ATWVPLLCFVLHVISWLLIFSILLVFDYAEL). Over 165 to 191 (MGLKQVYYHVLGLGEPLALKSPRALRL) the chain is Nuclear. Residues 192–210 (FSHLRHPVCVELLTVLWVV) form a helical membrane-spanning segment. Residues 211–216 (PTLGTD) are Perinuclear space-facing. Residues 217–234 (RLLLAFLLTLYLGLAHGL) traverse the membrane as a helical segment. Residues 235–262 (DQQDLRYLRAQLQRKLHLLSRPQDGEAE) are Nuclear-facing.

It belongs to the nurim family.

It localises to the nucleus inner membrane. The sequence is that of Nurim (NRM) from Homo sapiens (Human).